An 889-amino-acid polypeptide reads, in one-letter code: MKLDIKKTFSNRSDRVKGIDFHPTEPWVLTTLYSGRVELWNYETQVEVRSIQVTETPVRAGKFIARKNWIIVGSDDFRIRVFNYNTGEKVVDFEAHPDYIRSIAVHPTKPYVLSGSDDLTVKLWNWENNWALEQTFEGHEHFVMCVAFNPKDPSTFASGCLDRTVKVWSLGQSTPNFTLTTGQERGVNYVDYYPLPDKPYMITASDDLTIKIWDYQTKSCVATLEGHMSNVSFAVFHPTLPIIISGSEDGTLKIWNSSTYKVEKTLNVGLERSWCIATHPTGRKNYIASGFDNGFTVLSLGNDEPTLSLDPVGKLVWSGGKNAAASDIFTAVIRGNEEVEQDEPLSLQTKELGSVDVFPQSLAHSPNGRFVTVVGDGEYVIYTALAWRNKAFGKCQDFVWGPDSNSYALIDETGQIKYYKNFKEVTSWSVPMHSAIDRLFSGALLGVKSDGFVYFFDWDNGTLVRRIDVNAKDVIWSDNGELVMIVNTNSNGDEASGYTLLFNKDAYLEAANNGNIDDSEGVDEAFDVLYELSESITSGKWVGDVFIFTTATNRLNYFVGGKTYNLAHYTKEMYLLGYLARDNKVYLADREVHVYGYEISLEVLEFQTLTLRGEIEEAIENVLPNVEGKDSLTKIARFLEGQEYYEEALNISPDQDQKFELALKVGQLTLARDLLTDESAEMKWRALGDASLQRFNFKLAVEAFTNAHDLESLFLLHSSFNNKEGLVTLAKDAERAGKFNLAFNAYWIAGDIQGAKDLLIKSQRFSEAAFLGSTYGLGDDAVNDIVTKWKENLILNGKNTVSERVCGAEGLPGSSSSGDAQPLIDLDSTPAPEQADENKEAEVEDSEFKESNSEAVEAEKKEEEAPQQQQSEQQPEQGEAVPEPVEEES.

6 WD repeats span residues 11-41 (NRSDRVKGIDFHPTEPWVLTTLYSGRVELWN), 53-83 (VTETPVRAGKFIARKNWIIVGSDDFRIRVFN), 95-125 (AHPDYIRSIAVHPTKPYVLSGSDDLTVKLWN), 138-169 (GHEHFVMCVAFNPKDPSTFASGCLDRTVKVWS), 182-214 (GQERGVNYVDYYPLPDKPYMITASDDLTIKIWD), and 226-256 (GHMSNVSFAVFHPTLPIIISGSEDGTLKIWN). Residue S326 is modified to Phosphoserine. The segment at 806 to 889 (CGAEGLPGSS…AVPEPVEEES (84 aa)) is disordered. Positions 836-864 (DENKEAEVEDSEFKESNSEAVEAEKKEEE) are enriched in basic and acidic residues. Residues 866 to 879 (PQQQQSEQQPEQGE) show a composition bias toward low complexity.

Belongs to the WD repeat COPB2 family. As to quaternary structure, oligomeric complex that consists of at least the alpha, beta, beta', gamma, delta, epsilon and zeta subunits. Interacts with the ESCRT-0 subunit VPS27.

It localises to the cytoplasm. The protein resides in the golgi apparatus membrane. Its subcellular location is the cytoplasmic vesicle. The protein localises to the COPI-coated vesicle membrane. Functionally, the coatomer is a cytosolic protein complex that binds to dilysine motifs and reversibly associates with Golgi non-clathrin-coated vesicles, which further mediate biosynthetic protein transport from the ER, via the Golgi up to the trans Golgi network. Coatomer complex is required for budding from Golgi membranes, and is essential for the retrograde Golgi-to-ER transport of dilysine-tagged proteins. The polypeptide is Coatomer subunit beta' (SEC27) (Saccharomyces cerevisiae (strain ATCC 204508 / S288c) (Baker's yeast)).